We begin with the raw amino-acid sequence, 479 residues long: MGTPGTSAGALFLSSASAPSRKRAAGEAGEAGVARSRQRVLDEEEYIEGLQTVIQRDFFPDVEKLQAQKEYLEAEENGDLERMRQIAIKFGSALGKISREPPPPYVTPATFETPEVHPGSAVLGNKPRPQGRDLDDGEAGEEEEKEPLPSLDVFLSQYTSEDNASFQEIMEVAKEKSHARHAWLYQAEEEFEKRQKDNLELPSAEHQAIESSQAGVETWKYKAKNSLMYYPEGVPDEEQLFKKPRQIVHKNTRFLRDPFSQALSRSQLQQAAALNAQHKQGKVGPDGKELIPQESPRVGGFGFVATPSPAPGVNESPLMTWGEVENTPLRVEGSESPYVDRTPGPTFKILEPGRRERLGLKMANEAAAKNRAKKQEALRRVTENLASLTPKGLSPAMSPALQRLVSRTASKYTDRALRASYTPSPARSSHLKTPAGGPQTPTSTPAPGSATRTPLTQDPASITDNLLQLPARRKASDFF.

Methionine 1 carries the post-translational modification N-acetylmethionine. 2 disordered regions span residues 1-38 (MGTPGTSAGALFLSSASAPSRKRAAGEAGEAGVARSRQ) and 95-152 (GKIS…PSLD). Threonine 3 is modified (phosphothreonine). Positions 7 to 19 (SAGALFLSSASAP) are enriched in low complexity. Residues 135 to 145 (DDGEAGEEEEK) are compositionally biased toward acidic residues. Lysine 145 is covalently cross-linked (Glycyl lysine isopeptide (Lys-Gly) (interchain with G-Cter in SUMO2)). Serine 295 carries the post-translational modification Phosphoserine. Threonine 389 is subject to Phosphothreonine. Phosphoserine occurs at positions 394 and 398. The interval 415–479 (RALRASYTPS…PARRKASDFF (65 aa)) is disordered. A compositionally biased stretch (low complexity) spans 433–454 (TPAGGPQTPTSTPAPGSATRTP). Over residues 455 to 466 (LTQDPASITDNL) the composition is skewed to polar residues.

This sequence belongs to the ESS2 family. In terms of assembly, identified in the spliceosome C complex. Interacts with FRA10AC1. In terms of tissue distribution, in the adult, widely expressed with highest expression in the testis and brain. Also widely expressed in the embryo with highest levels in the anterior pons.

It localises to the nucleus. In terms of biological role, may be involved in pre-mRNA splicing. This Mus musculus (Mouse) protein is Splicing factor ESS-2 homolog (Ess2).